Reading from the N-terminus, the 66-residue chain is Prokaryotic ubiquitin-like protein Pup (66 aa).

Residues 1–10 are compositionally biased toward low complexity; it reads MAGQEQQSSS. Positions 1-39 are disordered; sequence MAGQEQQSSSPREEEHEVADAPVPVPSSPQASAHTDGVD. Positions 23-60 are ARC ATPase binding; that stretch reads VPVPSSPQASAHTDGVDDLLDEIDGVLESNAEEFVRGF. Glutamine 66 is subject to Deamidated glutamine. Glutamine 66 is covalently cross-linked (Isoglutamyl lysine isopeptide (Gln-Lys) (interchain with K-? in acceptor proteins)).

This sequence belongs to the prokaryotic ubiquitin-like protein family. As to quaternary structure, strongly interacts with the proteasome-associated ATPase ARC through a hydrophobic interface; the interacting region of Pup lies in its C-terminal half. There is one Pup binding site per ARC hexamer ring. Is modified by deamidation of its C-terminal glutamine to glutamate by the deamidase Dop, a prerequisite to the subsequent pupylation process.

The protein operates within protein degradation; proteasomal Pup-dependent pathway. In terms of biological role, protein modifier that is covalently attached to lysine residues of substrate proteins, thereby targeting them for proteasomal degradation. The tagging system is termed pupylation. This is Prokaryotic ubiquitin-like protein Pup from Renibacterium salmoninarum (strain ATCC 33209 / DSM 20767 / JCM 11484 / NBRC 15589 / NCIMB 2235).